A 124-amino-acid chain; its full sequence is Small ribosomal subunit protein bS6 (124 aa).

A disordered region spans residues 96–124 (ETGPSPMMKEVQREEAKKAAAAQPTEAQA). Positions 114–124 (AAAAQPTEAQA) are enriched in low complexity.

This sequence belongs to the bacterial ribosomal protein bS6 family.

Functionally, binds together with bS18 to 16S ribosomal RNA. The polypeptide is Small ribosomal subunit protein bS6 (Burkholderia vietnamiensis (strain G4 / LMG 22486) (Burkholderia cepacia (strain R1808))).